A 181-amino-acid polypeptide reads, in one-letter code: Adenylate kinase (181 aa).

Position 7–15 (glycine 7–threonine 15) interacts with ATP.

This sequence belongs to the archaeal adenylate kinase family.

The protein localises to the cytoplasm. The catalysed reaction is AMP + ATP = 2 ADP. In Thermoplasma volcanium (strain ATCC 51530 / DSM 4299 / JCM 9571 / NBRC 15438 / GSS1), this protein is Adenylate kinase (adkA).